Reading from the N-terminus, the 95-residue chain is Protein TusB (95 aa).

This sequence belongs to the DsrH/TusB family. In terms of assembly, heterohexamer, formed by a dimer of trimers. The hexameric TusBCD complex contains 2 copies each of TusB, TusC and TusD. The TusBCD complex interacts with TusE.

The protein resides in the cytoplasm. In terms of biological role, part of a sulfur-relay system required for 2-thiolation of 5-methylaminomethyl-2-thiouridine (mnm(5)s(2)U) at tRNA wobble positions. The chain is Protein TusB from Shigella flexneri.